The primary structure comprises 89 residues: Small ribosomal subunit protein uS15 (89 aa).

The protein belongs to the universal ribosomal protein uS15 family. In terms of assembly, part of the 30S ribosomal subunit. Forms a bridge to the 50S subunit in the 70S ribosome, contacting the 23S rRNA.

Its function is as follows. One of the primary rRNA binding proteins, it binds directly to 16S rRNA where it helps nucleate assembly of the platform of the 30S subunit by binding and bridging several RNA helices of the 16S rRNA. In terms of biological role, forms an intersubunit bridge (bridge B4) with the 23S rRNA of the 50S subunit in the ribosome. This is Small ribosomal subunit protein uS15 from Tolumonas auensis (strain DSM 9187 / NBRC 110442 / TA 4).